We begin with the raw amino-acid sequence, 277 residues long: NH(3)-dependent NAD(+) synthetase (277 aa).

36 to 43 lines the ATP pocket; the sequence is GLSGGIDS. Mg(2+) is bound at residue aspartate 42. Arginine 118 lines the deamido-NAD(+) pocket. Threonine 138 is an ATP binding site. Glutamate 143 is a binding site for Mg(2+). Lysine 167 and serine 189 together coordinate ATP.

The protein belongs to the NAD synthetase family. Homodimer.

It catalyses the reaction deamido-NAD(+) + NH4(+) + ATP = AMP + diphosphate + NAD(+) + H(+). Its pathway is cofactor biosynthesis; NAD(+) biosynthesis; NAD(+) from deamido-NAD(+) (ammonia route): step 1/1. In terms of biological role, catalyzes the ATP-dependent amidation of deamido-NAD to form NAD. Uses ammonia as a nitrogen source. In Chlorobium phaeovibrioides (strain DSM 265 / 1930) (Prosthecochloris vibrioformis (strain DSM 265)), this protein is NH(3)-dependent NAD(+) synthetase.